Here is a 60-residue protein sequence, read N- to C-terminus: Colanic acid capsular biosynthesis activation protein B (60 aa).

In Klebsiella aerogenes (Enterobacter aerogenes), this protein is Colanic acid capsular biosynthesis activation protein B (rcsB).